A 467-amino-acid chain; its full sequence is NALCN channel auxiliary factor 1 (467 aa).

A helical membrane pass occupies residues 40–60 (LSLASLLFFTVLLSDHLWFCA). Residues 121–161 (MGESSPAAQAHRLLSASSSPTLPPSPGGGGGSKGNRGKNNR) form a disordered region. 3 N-linked (GlcNAc...) asparagine glycosylation sites follow: N160, N226, and N254. Intrachain disulfides connect C200/C270, C235/C322, C255/C270, C313/C350, C333/C386, C339/C385, and C343/C370. Positions 390–408 (SEEQTAPRPKGTVDRRDSC) are enriched in basic and acidic residues. Positions 390–409 (SEEQTAPRPKGTVDRRDSCP) are disordered. Residues 426–446 (LKLCVLVLILLHTVLTASAAQ) traverse the membrane as a helical segment. An N-linked (GlcNAc...) asparagine glycan is attached at N462.

This sequence belongs to the NALF family. As to quaternary structure, component of the NALCN channel complex. NALCN complex consists of NALCN and auxiliary subunits, UNC79, UNC80 and NACL1. These auxiliary subunits are essential for the NALCN channel function.

The protein localises to the cell membrane. In terms of biological role, auxillary component of the NALCN sodium channel complex, a channel that regulates the resting membrane potential and controls neuronal excitability. The polypeptide is NALCN channel auxiliary factor 1 (Mus musculus (Mouse)).